A 178-amino-acid chain; its full sequence is Beta-lactoglobulin-1A/1C (178 aa).

The N-terminal stretch at Met1–Ala18 is a signal peptide. Disulfide bonds link Cys84-Cys176 and Cys124-Cys137.

The protein belongs to the calycin superfamily. Lipocalin family. In terms of assembly, under physiological conditions beta-lactoglobulin exists as an equilibrium mixture of monomeric and dimeric forms.

Its subcellular location is the secreted. Its function is as follows. Lactoglobulin is the primary component of whey, it binds retinol and is probably involved in the transport of that molecule. The polypeptide is Beta-lactoglobulin-1A/1C (Sus scrofa (Pig)).